The following is a 1099-amino-acid chain: ATP-dependent helicase/deoxyribonuclease subunit B (1099 aa).

[4Fe-4S] cluster is bound by residues C766, C1056, C1059, and C1065.

It belongs to the helicase family. AddB/RexB type 2 subfamily. Heterodimer of AddA and RexB. Mg(2+) serves as cofactor. [4Fe-4S] cluster is required as a cofactor.

In terms of biological role, the heterodimer acts as both an ATP-dependent DNA helicase and an ATP-dependent, dual-direction single-stranded exonuclease. Recognizes the chi site generating a DNA molecule suitable for the initiation of homologous recombination. This subunit has 5' -&gt; 3' nuclease activity but not helicase activity. In Lactococcus lactis subsp. cremoris (strain SK11), this protein is ATP-dependent helicase/deoxyribonuclease subunit B.